Reading from the N-terminus, the 291-residue chain is N-acetylmannosamine kinase (291 aa).

ATP is bound by residues Ala5–Lys12 and Gly132–Ser139. Zn(2+) contacts are provided by His156, Cys166, Cys168, and Cys173.

It belongs to the ROK (NagC/XylR) family. NanK subfamily. Homodimer.

It carries out the reaction an N-acyl-D-mannosamine + ATP = an N-acyl-D-mannosamine 6-phosphate + ADP + H(+). Its pathway is amino-sugar metabolism; N-acetylneuraminate degradation; D-fructose 6-phosphate from N-acetylneuraminate: step 2/5. Functionally, catalyzes the phosphorylation of N-acetylmannosamine (ManNAc) to ManNAc-6-P. This Escherichia fergusonii (strain ATCC 35469 / DSM 13698 / CCUG 18766 / IAM 14443 / JCM 21226 / LMG 7866 / NBRC 102419 / NCTC 12128 / CDC 0568-73) protein is N-acetylmannosamine kinase.